The following is a 232-amino-acid chain: Orotidine 5'-phosphate decarboxylase (232 aa).

Substrate contacts are provided by residues Asp11, Lys33, 60-69, Thr120, Arg181, Gln190, Gly210, and Arg211; that span reads DLKFHDIPNT. Catalysis depends on Lys62, which acts as the Proton donor.

It belongs to the OMP decarboxylase family. Type 1 subfamily. Homodimer.

The catalysed reaction is orotidine 5'-phosphate + H(+) = UMP + CO2. It functions in the pathway pyrimidine metabolism; UMP biosynthesis via de novo pathway; UMP from orotate: step 2/2. Catalyzes the decarboxylation of orotidine 5'-monophosphate (OMP) to uridine 5'-monophosphate (UMP). This chain is Orotidine 5'-phosphate decarboxylase, found in Vibrio vulnificus (strain CMCP6).